A 307-amino-acid chain; its full sequence is D-alanine--D-alanine ligase (307 aa).

Residues 105–304 (KMLWKGFGLP…FEKLVEKILE (200 aa)) form the ATP-grasp domain. An ATP-binding site is contributed by 135 to 190 (VARLGLPLMVKPSREGSSVGLTKVDSADKLKSAVDLALKFDDIVLIEEWLSGDELT). The Mg(2+) site is built by Asp258, Glu271, and Asn273.

This sequence belongs to the D-alanine--D-alanine ligase family. The cofactor is Mg(2+). Mn(2+) serves as cofactor.

Its subcellular location is the cytoplasm. It carries out the reaction 2 D-alanine + ATP = D-alanyl-D-alanine + ADP + phosphate + H(+). It participates in cell wall biogenesis; peptidoglycan biosynthesis. Cell wall formation. In Actinobacillus succinogenes (strain ATCC 55618 / DSM 22257 / CCUG 43843 / 130Z), this protein is D-alanine--D-alanine ligase.